Consider the following 135-residue polypeptide: NADPH-dependent 7-cyano-7-deazaguanine reductase (135 aa).

The active-site Thioimide intermediate is C48. D55 serves as the catalytic Proton donor. Residues 70–72 (LEL) and 89–90 (HE) each bind substrate.

Belongs to the GTP cyclohydrolase I family. QueF type 1 subfamily.

Its subcellular location is the cytoplasm. The enzyme catalyses 7-aminomethyl-7-carbaguanine + 2 NADP(+) = 7-cyano-7-deazaguanine + 2 NADPH + 3 H(+). It functions in the pathway tRNA modification; tRNA-queuosine biosynthesis. In terms of biological role, catalyzes the NADPH-dependent reduction of 7-cyano-7-deazaguanine (preQ0) to 7-aminomethyl-7-deazaguanine (preQ1). In Prochlorococcus marinus (strain SARG / CCMP1375 / SS120), this protein is NADPH-dependent 7-cyano-7-deazaguanine reductase.